We begin with the raw amino-acid sequence, 286 residues long: Small ribosomal subunit protein uS3 (286 aa).

Positions Val39 to Arg107 constitute a KH type-2 domain. The interval Gln213–Ser286 is disordered. Positions Gly241 to Asn262 are enriched in basic and acidic residues.

This sequence belongs to the universal ribosomal protein uS3 family. In terms of assembly, part of the 30S ribosomal subunit. Forms a tight complex with proteins S10 and S14.

Binds the lower part of the 30S subunit head. Binds mRNA in the 70S ribosome, positioning it for translation. This Nitrosospira multiformis (strain ATCC 25196 / NCIMB 11849 / C 71) protein is Small ribosomal subunit protein uS3.